Consider the following 919-residue polypeptide: Sarcosine dehydrogenase, mitochondrial (919 aa).

The transit peptide at 1–22 (MASLSRVLRVAATCPRGRAAWN) directs the protein to the mitochondrion. An N6-succinyllysine modification is found at Lys38. Position 109 is a tele-8alpha-FAD histidine (His109). The residue at position 174 (Lys174) is an N6-acetyllysine; alternate. Lys174 is modified (N6-succinyllysine; alternate). An N6-succinyllysine mark is found at Lys278, Lys378, Lys392, and Lys535. N6-acetyllysine occurs at positions 560 and 776. Position 778 is a phosphotyrosine (Tyr778). N6-acetyllysine; alternate occurs at positions 803, 885, and 905. Lys803, Lys885, and Lys905 each carry N6-succinyllysine; alternate.

This sequence belongs to the GcvT family. It depends on FAD as a cofactor.

The protein localises to the mitochondrion matrix. It carries out the reaction (6S)-5,6,7,8-tetrahydrofolyl-(gamma-L-Glu)(n) + sarcosine + oxidized [electron-transfer flavoprotein] + H(+) = (6R)-5,10-methylenetetrahydrofolyl-(gamma-L-Glu)(n) + reduced [electron-transfer flavoprotein] + glycine. It participates in amine and polyamine degradation; sarcosine degradation; formaldehyde and glycine from sarcosine: step 1/1. Catalyzes the last step of the oxidative degradation of choline to glycine. Converts sarcosine into glycine. This Mus musculus (Mouse) protein is Sarcosine dehydrogenase, mitochondrial.